The following is a 617-amino-acid chain: 1-deoxy-D-xylulose-5-phosphate synthase (617 aa).

Thiamine diphosphate-binding positions include H77 and 118–120 (GHS). Residue D149 coordinates Mg(2+). Residues 150–151 (GA), N178, Y286, and E367 contribute to the thiamine diphosphate site. Position 178 (N178) interacts with Mg(2+).

Belongs to the transketolase family. DXPS subfamily. Homodimer. Mg(2+) is required as a cofactor. Requires thiamine diphosphate as cofactor.

It catalyses the reaction D-glyceraldehyde 3-phosphate + pyruvate + H(+) = 1-deoxy-D-xylulose 5-phosphate + CO2. It functions in the pathway metabolic intermediate biosynthesis; 1-deoxy-D-xylulose 5-phosphate biosynthesis; 1-deoxy-D-xylulose 5-phosphate from D-glyceraldehyde 3-phosphate and pyruvate: step 1/1. Functionally, catalyzes the acyloin condensation reaction between C atoms 2 and 3 of pyruvate and glyceraldehyde 3-phosphate to yield 1-deoxy-D-xylulose-5-phosphate (DXP). The chain is 1-deoxy-D-xylulose-5-phosphate synthase from Actinobacillus pleuropneumoniae serotype 5b (strain L20).